Here is a 184-residue protein sequence, read N- to C-terminus: Flagellar transcriptional regulator FlhC (184 aa).

4 residues coordinate Zn(2+): Cys-144, Cys-147, Cys-163, and Cys-166.

Belongs to the FlhC family. In terms of assembly, heterohexamer composed of two FlhC and four FlhD subunits. Each FlhC binds a FlhD dimer, forming a heterotrimer, and a hexamer assembles by dimerization of two heterotrimers. It depends on Zn(2+) as a cofactor.

Its subcellular location is the cytoplasm. Functionally, functions in complex with FlhD as a master transcriptional regulator that regulates transcription of several flagellar and non-flagellar operons by binding to their promoter region. Activates expression of class 2 flagellar genes, including fliA, which is a flagellum-specific sigma factor that turns on the class 3 genes. Also regulates genes whose products function in a variety of physiological pathways. The chain is Flagellar transcriptional regulator FlhC from Verminephrobacter eiseniae (strain EF01-2).